The chain runs to 954 residues: Glycine dehydrogenase (decarboxylating) (954 aa).

N6-(pyridoxal phosphate)lysine is present on Lys704.

It belongs to the GcvP family. The glycine cleavage system is composed of four proteins: P, T, L and H. Requires pyridoxal 5'-phosphate as cofactor.

The catalysed reaction is N(6)-[(R)-lipoyl]-L-lysyl-[glycine-cleavage complex H protein] + glycine + H(+) = N(6)-[(R)-S(8)-aminomethyldihydrolipoyl]-L-lysyl-[glycine-cleavage complex H protein] + CO2. Functionally, the glycine cleavage system catalyzes the degradation of glycine. The P protein binds the alpha-amino group of glycine through its pyridoxal phosphate cofactor; CO(2) is released and the remaining methylamine moiety is then transferred to the lipoamide cofactor of the H protein. This is Glycine dehydrogenase (decarboxylating) from Rhizobium meliloti (strain 1021) (Ensifer meliloti).